We begin with the raw amino-acid sequence, 911 residues long: Valine--tRNA ligase (911 aa).

The 'HIGH' region motif lies at 57-67 (PTVSGSLHVGH). Positions 599–603 (KMSKS) match the 'KMSKS' region motif. Lys602 contributes to the ATP binding site. A disordered region spans residues 882–911 (EESAAEGTPETEVAVEASELGEPPAKKPKH).

Belongs to the class-I aminoacyl-tRNA synthetase family. ValS type 2 subfamily. Monomer.

It is found in the cytoplasm. The catalysed reaction is tRNA(Val) + L-valine + ATP = L-valyl-tRNA(Val) + AMP + diphosphate. Functionally, catalyzes the attachment of valine to tRNA(Val). As ValRS can inadvertently accommodate and process structurally similar amino acids such as threonine, to avoid such errors, it has a 'posttransfer' editing activity that hydrolyzes mischarged Thr-tRNA(Val) in a tRNA-dependent manner. The sequence is that of Valine--tRNA ligase from Bifidobacterium longum (strain NCC 2705).